A 263-amino-acid polypeptide reads, in one-letter code: Small ribosomal subunit protein eS1 (263 aa).

The segment at 235 to 263 is disordered; it reads HGEGGGGKGEAGDKSERPEGYEPPVQESV. Residues 244 to 254 are compositionally biased toward basic and acidic residues; that stretch reads EAGDKSERPEG.

It belongs to the eukaryotic ribosomal protein eS1 family. In terms of assembly, component of the small ribosomal subunit. Mature ribosomes consist of a small (40S) and a large (60S) subunit. The 40S subunit contains about 33 different proteins and 1 molecule of RNA (18S). The 60S subunit contains about 49 different proteins and 3 molecules of RNA (28S, 5.8S and 5S).

The protein localises to the cytoplasm. This Bombyx mori (Silk moth) protein is Small ribosomal subunit protein eS1.